Consider the following 119-residue polypeptide: Class I hydrophobin 2 (119 aa).

An N-terminal signal peptide occupies residues 1 to 22 (MFARISTIITTLFFAMLAAATA). Cystine bridges form between cysteine 36-cysteine 97, cysteine 45-cysteine 91, cysteine 46-cysteine 79, and cysteine 98-cysteine 112.

It belongs to the fungal hydrophobin family. As to quaternary structure, self-assembles to form functional amyloid fibrils called rodlets. Self-assembly into fibrillar rodlets occurs spontaneously at hydrophobic:hydrophilic interfaces and the rodlets further associate laterally to form amphipathic monolayers.

Its subcellular location is the secreted. It localises to the cell wall. Its function is as follows. Aerial growth, conidiation, and dispersal of filamentous fungi in the environment rely upon a capability of their secreting small amphipathic proteins called hydrophobins (HPBs) with low sequence identity. Class I can self-assemble into an outermost layer of rodlet bundles on aerial cell surfaces, conferring cellular hydrophobicity that supports fungal growth, development and dispersal; whereas Class II form highly ordered films at water-air interfaces through intermolecular interactions but contribute nothing to the rodlet structure. Abh2 is a class I hydrophobin involved in the emergence of aerial hyphae and strands. This chain is Class I hydrophobin 2, found in Agaricus bisporus (White button mushroom).